We begin with the raw amino-acid sequence, 505 residues long: ATP synthase subunit alpha (505 aa).

Glycine 170 to threonine 177 lines the ATP pocket.

This sequence belongs to the ATPase alpha/beta chains family. In terms of assembly, F-type ATPases have 2 components, CF(1) - the catalytic core - and CF(0) - the membrane proton channel. CF(1) has five subunits: alpha(3), beta(3), gamma(1), delta(1), epsilon(1). CF(0) has four main subunits: a(1), b(1), b'(1) and c(9-12).

The protein localises to the cellular thylakoid membrane. It carries out the reaction ATP + H2O + 4 H(+)(in) = ADP + phosphate + 5 H(+)(out). Produces ATP from ADP in the presence of a proton gradient across the membrane. The alpha chain is a regulatory subunit. The sequence is that of ATP synthase subunit alpha from Synechococcus elongatus (strain ATCC 33912 / PCC 7942 / FACHB-805) (Anacystis nidulans R2).